Consider the following 86-residue polypeptide: Large ribosomal subunit protein uL23c (86 aa).

The protein belongs to the universal ribosomal protein uL23 family. In terms of assembly, part of the 50S ribosomal subunit.

The protein localises to the plastid. Its subcellular location is the chloroplast. Its function is as follows. Binds to 23S rRNA. The polypeptide is Large ribosomal subunit protein uL23c (rpl23) (Chlorella vulgaris (Green alga)).